The following is a 267-amino-acid chain: Sulfur carrier protein FdhD (267 aa).

Catalysis depends on cysteine 108, which acts as the Cysteine persulfide intermediate.

It belongs to the FdhD family.

It localises to the cytoplasm. Required for formate dehydrogenase (FDH) activity. Acts as a sulfur carrier protein that transfers sulfur from IscS to the molybdenum cofactor prior to its insertion into FDH. This chain is Sulfur carrier protein FdhD, found in Shouchella clausii (strain KSM-K16) (Alkalihalobacillus clausii).